The sequence spans 187 residues: CRISPR system Cmr subunit Cmr1-2 (187 aa).

It belongs to the CRISPR system Cmr1 family. In terms of assembly, part of the type III-B Cmr ribonucleoprotein (RNP) complex. This is an elongated RNP with Cmr2 and Cmr3 as the base, with Cmr4 and Cmr5 forming a helical core along the mature crRNA (39 or 45 nt in length), while the complex is capped by Cmr6 and Cmr1. The 5' end of the crRNA is bound to Cmr2 and Cmr3, while Cmr6 and a Cmr1 subunit (Cmr1-1 or Cmr1-2) cap the 3' end of the crRNA. The target RNA lies antiparallel to the crRNA, with its 5' end near Cmr1 and Cmr6 and its 3' end near Cmr2 and Cmr3; major target cleavage occurs nears the junction of Cmr1/Cmr6 and Cmr4/Cmr, with minor cleavage occurring at 6 nt intervals which coincide with the proposed spacing of Cmr4 subunits.

Its subcellular location is the cytoplasm. In terms of biological role, CRISPR (clustered regularly interspaced short palindromic repeat), is an adaptive immune system that provides protection against mobile genetic elements (viruses, transposable elements and conjugative plasmids). CRISPR clusters contain sequences complementary to antecedent mobile elements and target invading nucleic acids. CRISPR clusters are transcribed and processed into CRISPR RNA (crRNA), formerly called psiRNA (prokaryotic silencing) in this organism. Part of the Cmr ribonucleoprotein complex which has divalent cation-dependent endoribonuclease activity specific for ssRNA complementary to the crRNA (target RNA), generating 5' hydroxy- and 3' phosphate or 2'-3' cyclic phosphate termini. Cmr4 is probably the subunit that cleaves target RNA. Cmr complex does not cleave ssDNA complementary to the crRNA. Cleavage of invading RNA is guided by the crRNA; substrate cleavage occurs a fixed distance (14 nt) from the 3' end of the crRNA. In vitro reconstitution shows Cmr1-2 and Cmr5 are not absolutely necessary for target cleavage. In Pyrococcus furiosus (strain ATCC 43587 / DSM 3638 / JCM 8422 / Vc1), this protein is CRISPR system Cmr subunit Cmr1-2.